The following is a 304-amino-acid chain: uncharacterized protein (304 aa).

Residues 1-22 (MKKSLTLLILLLCSLLFSTVLS) form the signal peptide. Residues 91–111 (PAPAPTPESSDPDEPMKPDDS) are disordered. Residues asparagine 133, asparagine 160, asparagine 183, and asparagine 233 are each glycosylated (N-linked (GlcNAc...) asparagine). Serine 282 carries GPI-anchor amidated serine lipidation. The propeptide at 283–304 (SSHLFGVLPFLPLVLCIFLFLL) is removed in mature form.

The protein localises to the cell membrane. This is an uncharacterized protein from Arabidopsis thaliana (Mouse-ear cress).